Here is a 285-residue protein sequence, read N- to C-terminus: NAD kinase (285 aa).

D66 (proton acceptor) is an active-site residue. NAD(+) contacts are provided by residues 66-67 (DG), 137-138 (ND), R148, R165, D167, and 178-183 (TAYSLS).

Belongs to the NAD kinase family. It depends on a divalent metal cation as a cofactor.

It localises to the cytoplasm. The enzyme catalyses NAD(+) + ATP = ADP + NADP(+) + H(+). In terms of biological role, involved in the regulation of the intracellular balance of NAD and NADP, and is a key enzyme in the biosynthesis of NADP. Catalyzes specifically the phosphorylation on 2'-hydroxyl of the adenosine moiety of NAD to yield NADP. The polypeptide is NAD kinase (Prosthecochloris aestuarii (strain DSM 271 / SK 413)).